A 194-amino-acid polypeptide reads, in one-letter code: Peptidyl-tRNA hydrolase (194 aa).

Residue Y16 coordinates tRNA. H21 serves as the catalytic Proton acceptor. Residues F67, N69, and N115 each contribute to the tRNA site.

Belongs to the PTH family. In terms of assembly, monomer.

The protein localises to the cytoplasm. It catalyses the reaction an N-acyl-L-alpha-aminoacyl-tRNA + H2O = an N-acyl-L-amino acid + a tRNA + H(+). Its function is as follows. Hydrolyzes ribosome-free peptidyl-tRNAs (with 1 or more amino acids incorporated), which drop off the ribosome during protein synthesis, or as a result of ribosome stalling. In terms of biological role, catalyzes the release of premature peptidyl moieties from peptidyl-tRNA molecules trapped in stalled 50S ribosomal subunits, and thus maintains levels of free tRNAs and 50S ribosomes. The protein is Peptidyl-tRNA hydrolase of Klebsiella pneumoniae (strain 342).